The chain runs to 148 residues: Phosphopantetheine adenylyltransferase (148 aa).

Belongs to the eukaryotic CoaD family.

It is found in the cytoplasm. It catalyses the reaction (R)-4'-phosphopantetheine + ATP + H(+) = 3'-dephospho-CoA + diphosphate. It participates in cofactor biosynthesis; coenzyme A biosynthesis. Reversibly transfers an adenylyl group from ATP to 4'-phosphopantetheine, yielding dephospho-CoA (dPCoA) and pyrophosphate. This is Phosphopantetheine adenylyltransferase from Archaeoglobus fulgidus (strain ATCC 49558 / DSM 4304 / JCM 9628 / NBRC 100126 / VC-16).